The primary structure comprises 311 residues: DNA-directed RNA polymerase subunit alpha (311 aa).

The tract at residues 1 to 227 is alpha N-terminal domain (alpha-NTD); it reads MAQFQIECVE…NLFCSLRNLD (227 aa). An alpha C-terminal domain (alpha-CTD) region spans residues 242-311; the sequence is ISQVLIEELQ…GISLPKEKTD (70 aa).

This sequence belongs to the RNA polymerase alpha chain family. In terms of assembly, in plastids the minimal PEP RNA polymerase catalytic core is composed of four subunits: alpha, beta, beta', and beta''. When a (nuclear-encoded) sigma factor is associated with the core the holoenzyme is formed, which can initiate transcription.

The protein localises to the plastid. It is found in the chloroplast. The enzyme catalyses RNA(n) + a ribonucleoside 5'-triphosphate = RNA(n+1) + diphosphate. In terms of biological role, DNA-dependent RNA polymerase catalyzes the transcription of DNA into RNA using the four ribonucleoside triphosphates as substrates. In Porphyra purpurea (Red seaweed), this protein is DNA-directed RNA polymerase subunit alpha.